The following is a 92-amino-acid chain: Small ribosomal subunit protein uS19c (92 aa).

This sequence belongs to the universal ribosomal protein uS19 family.

Its subcellular location is the plastid. It localises to the chloroplast. Functionally, protein S19 forms a complex with S13 that binds strongly to the 16S ribosomal RNA. In Nicotiana sylvestris (Wood tobacco), this protein is Small ribosomal subunit protein uS19c.